The sequence spans 344 residues: RNA-binding protein squid (344 aa).

Residues methionine 1 to aspartate 55 are disordered. Residues glycine 36 to serine 49 are compositionally biased toward polar residues. 2 RRM domains span residues arginine 56–isoleucine 138 and glycine 136–proline 213. Serine 148 bears the Phosphoserine mark. Disordered regions lie at residues lysine 214 to tyrosine 238 and glycine 301 to tyrosine 344. The segment at proline 215–tyrosine 254 is M9-like motif. Gly residues-rich tracts occupy residues glycine 222–tyrosine 238 and glycine 301–arginine 337. An M9 motif region spans residues glycine 300–glutamine 338.

In terms of assembly, interacts with bru1/Bruno; the interaction is direct but weak, and may play a role in regulation of grk mRNA localization and translation. As to quaternary structure, interacts (probably via M9 and M9-like motifs) with Tnpo/Transportin; the interaction is direct and is involved in nuclear localization. Interacts with fs(1)K10 (via N-terminus); may be involved in localization of sqd in the oocyte during oogenesis. Interacts (via C-terminus) with Hrb27C; the interaction is RNA dependent. Does not interact with Tnpo/Transportin. Interacts with fs(1)K10 (via N-terminus); may be involved in localization of sqd in the oocyte during oogenesis. In terms of assembly, interacts (probably via M9-like motif) with Tnpo/Transportin; the interaction is direct and is involved in nuclear localization. Interacts with fs(1)K10 (via N-terminus); may be involved in localization of sqd in the oocyte during oogenesis.

Its subcellular location is the nucleus. It localises to the cytoplasm. Functionally, component of ribonucleosomes. Could be needed to organize a concentration gradient of a dorsalizing morphogen (Dm) originating in the germinal vesicle. At least one of the isoforms is essential in somatic tissues. Interacts with grk mRNA (via 3' UTR) and involved in its localization to the dorsal anterior region of the oocyte during dorsal-ventral axis determination; may function as a ribonuclear protein complex together with otu and Hrb27C. Required for polytene chromosome dispersal in nurse cells during oogenesis; nuclear isoforms play a greater role in this than cytoplasmic isoforms. In terms of biological role, required nonredundantly with isoform A/sqdA for dorsoventral pattern determination during oogenesis. May be important in somatic tissues. Required nonredundantly with isoform B/SqdS for dorsoventral pattern determination during oogenesis. Its function is as follows. May lack a role in dorsoventral pattern determination during oogenesis. May be important in somatic tissues. The chain is RNA-binding protein squid from Drosophila melanogaster (Fruit fly).